The sequence spans 189 residues: ATP synthase subunit b 1 (189 aa).

The chain crosses the membrane as a helical span at residues 32–52; the sequence is TYFASQLFWLTIAFVILYIAL.

It belongs to the ATPase B chain family. As to quaternary structure, F-type ATPases have 2 components, F(1) - the catalytic core - and F(0) - the membrane proton channel. F(1) has five subunits: alpha(3), beta(3), gamma(1), delta(1), epsilon(1). F(0) has three main subunits: a(1), b(2) and c(10-14). The alpha and beta chains form an alternating ring which encloses part of the gamma chain. F(1) is attached to F(0) by a central stalk formed by the gamma and epsilon chains, while a peripheral stalk is formed by the delta and b chains.

Its subcellular location is the cell inner membrane. F(1)F(0) ATP synthase produces ATP from ADP in the presence of a proton or sodium gradient. F-type ATPases consist of two structural domains, F(1) containing the extramembraneous catalytic core and F(0) containing the membrane proton channel, linked together by a central stalk and a peripheral stalk. During catalysis, ATP synthesis in the catalytic domain of F(1) is coupled via a rotary mechanism of the central stalk subunits to proton translocation. Its function is as follows. Component of the F(0) channel, it forms part of the peripheral stalk, linking F(1) to F(0). This Maricaulis maris (strain MCS10) (Caulobacter maris) protein is ATP synthase subunit b 1.